Consider the following 419-residue polypeptide: Ras association domain-containing protein 8 (419 aa).

Residues 1-82 (MELKVWVDGV…VQLILRRTGP (82 aa)) form the Ras-associating domain. Serine 105 and serine 129 each carry phosphoserine. Threonine 131 carries the phosphothreonine modification. The disordered stretch occupies residues 372-399 (ASQADIETEAPFQSGSLKRPGSSRQLPS). Polar residues predominate over residues 382–399 (PFQSGSLKRPGSSRQLPS). Phosphoserine is present on serine 387.

The chain is Ras association domain-containing protein 8 (Rassf8) from Mus musculus (Mouse).